A 187-amino-acid chain; its full sequence is Elongation factor P 1 (187 aa).

This sequence belongs to the elongation factor P family.

It is found in the cytoplasm. It participates in protein biosynthesis; polypeptide chain elongation. Involved in peptide bond synthesis. Stimulates efficient translation and peptide-bond synthesis on native or reconstituted 70S ribosomes in vitro. Probably functions indirectly by altering the affinity of the ribosome for aminoacyl-tRNA, thus increasing their reactivity as acceptors for peptidyl transferase. The chain is Elongation factor P 1 from Geobacter sulfurreducens (strain ATCC 51573 / DSM 12127 / PCA).